A 205-amino-acid polypeptide reads, in one-letter code: Large ribosomal subunit protein uL4 (205 aa).

A disordered region spans residues 43-95 (RSGNRAQKDRAEVKHSTKKPWRQKGTGRARAGMTSSPLWRGGGRAFPNSPEEN). Over residues 48 to 57 (AQKDRAEVKH) the composition is skewed to basic and acidic residues. Residues 58–69 (STKKPWRQKGTG) show a composition bias toward basic residues.

The protein belongs to the universal ribosomal protein uL4 family. Part of the 50S ribosomal subunit.

One of the primary rRNA binding proteins, this protein initially binds near the 5'-end of the 23S rRNA. It is important during the early stages of 50S assembly. It makes multiple contacts with different domains of the 23S rRNA in the assembled 50S subunit and ribosome. Functionally, forms part of the polypeptide exit tunnel. This is Large ribosomal subunit protein uL4 from Bordetella pertussis (strain Tohama I / ATCC BAA-589 / NCTC 13251).